We begin with the raw amino-acid sequence, 1102 residues long: Carbamoyl phosphate synthase large chain (1102 aa).

The tract at residues 1–402 is carboxyphosphate synthetic domain; it reads MPKRTDLKSV…ALQKALRSLE (402 aa). ATP-binding residues include arginine 129, arginine 169, glycine 175, glycine 176, glutamate 208, isoleucine 210, glutamate 215, glycine 241, valine 242, histidine 243, glutamine 285, and glutamate 299. The ATP-grasp 1 domain maps to 133 to 328; it reads KGVVERCGAE…IAKIATKLSL (196 aa). The Mg(2+) site is built by glutamine 285, glutamate 299, and asparagine 301. 3 residues coordinate Mn(2+): glutamine 285, glutamate 299, and asparagine 301. The interval 403–546 is oligomerization domain; that stretch reads QKGSQLDFSS…YHYSSYDEED (144 aa). The interval 547–950 is carbamoyl phosphate synthetic domain; it reads EVGLHAKPSV…AFAKSQAAAN (404 aa). The region spanning 677 to 868 is the ATP-grasp 2 domain; the sequence is ARVLDEAGLT…MAKAAALIGT (192 aa). ATP is bound by residues arginine 713, arginine 752, leucine 754, glutamate 759, glycine 784, isoleucine 785, histidine 786, serine 787, glutamine 827, and glutamate 839. 3 residues coordinate Mg(2+): glutamine 827, glutamate 839, and asparagine 841. Residues glutamine 827, glutamate 839, and asparagine 841 each coordinate Mn(2+). Positions 951 to 1096 constitute an MGS-like domain; the sequence is NALPTEGKIF…QEHAANLSAA (146 aa). The interval 951-1102 is allosteric domain; sequence NALPTEGKIF…LSAAMEAANA (152 aa).

This sequence belongs to the CarB family. Composed of two chains; the small (or glutamine) chain promotes the hydrolysis of glutamine to ammonia, which is used by the large (or ammonia) chain to synthesize carbamoyl phosphate. Tetramer of heterodimers (alpha,beta)4. Requires Mg(2+) as cofactor. It depends on Mn(2+) as a cofactor.

The catalysed reaction is hydrogencarbonate + L-glutamine + 2 ATP + H2O = carbamoyl phosphate + L-glutamate + 2 ADP + phosphate + 2 H(+). The enzyme catalyses hydrogencarbonate + NH4(+) + 2 ATP = carbamoyl phosphate + 2 ADP + phosphate + 2 H(+). The protein operates within amino-acid biosynthesis; L-arginine biosynthesis; carbamoyl phosphate from bicarbonate: step 1/1. Its pathway is pyrimidine metabolism; UMP biosynthesis via de novo pathway; (S)-dihydroorotate from bicarbonate: step 1/3. Large subunit of the glutamine-dependent carbamoyl phosphate synthetase (CPSase). CPSase catalyzes the formation of carbamoyl phosphate from the ammonia moiety of glutamine, carbonate, and phosphate donated by ATP, constituting the first step of 2 biosynthetic pathways, one leading to arginine and/or urea and the other to pyrimidine nucleotides. The large subunit (synthetase) binds the substrates ammonia (free or transferred from glutamine from the small subunit), hydrogencarbonate and ATP and carries out an ATP-coupled ligase reaction, activating hydrogencarbonate by forming carboxy phosphate which reacts with ammonia to form carbamoyl phosphate. This is Carbamoyl phosphate synthase large chain from Paenarthrobacter aurescens (strain TC1).